The following is a 333-amino-acid chain: L-lactate dehydrogenase B chain (333 aa).

NAD(+) contacts are provided by residues 29–57 (GQVG…LEDK) and R99. Substrate is bound by residues R106, N138, and R169. N138 contacts NAD(+). H193 functions as the Proton acceptor in the catalytic mechanism. A substrate-binding site is contributed by T248.

This sequence belongs to the LDH/MDH superfamily. LDH family. As to quaternary structure, homotetramer.

Its subcellular location is the cytoplasm. The enzyme catalyses (S)-lactate + NAD(+) = pyruvate + NADH + H(+). The protein operates within fermentation; pyruvate fermentation to lactate; (S)-lactate from pyruvate: step 1/1. Interconverts simultaneously and stereospecifically pyruvate and lactate with concomitant interconversion of NADH and NAD(+). This Caiman crocodilus apaporiensis (Rio Apaporis caiman) protein is L-lactate dehydrogenase B chain (LDHB).